Reading from the N-terminus, the 232-residue chain is uncharacterized protein (232 aa).

A helical membrane pass occupies residues 10 to 32 (GLTIYLYPVIAWIILVTKIESGL).

The protein localises to the membrane. This is an uncharacterized protein from Archaeoglobus fulgidus (strain ATCC 49558 / DSM 4304 / JCM 9628 / NBRC 100126 / VC-16).